We begin with the raw amino-acid sequence, 419 residues long: Gamma-glutamyl phosphate reductase (419 aa).

This sequence belongs to the gamma-glutamyl phosphate reductase family.

It is found in the cytoplasm. It carries out the reaction L-glutamate 5-semialdehyde + phosphate + NADP(+) = L-glutamyl 5-phosphate + NADPH + H(+). Its pathway is amino-acid biosynthesis; L-proline biosynthesis; L-glutamate 5-semialdehyde from L-glutamate: step 2/2. Catalyzes the NADPH-dependent reduction of L-glutamate 5-phosphate into L-glutamate 5-semialdehyde and phosphate. The product spontaneously undergoes cyclization to form 1-pyrroline-5-carboxylate. This chain is Gamma-glutamyl phosphate reductase, found in Nitratidesulfovibrio vulgaris (strain ATCC 29579 / DSM 644 / CCUG 34227 / NCIMB 8303 / VKM B-1760 / Hildenborough) (Desulfovibrio vulgaris).